We begin with the raw amino-acid sequence, 431 residues long: Adenylosuccinate synthetase (431 aa).

Residues G13–K19 and G41–T43 contribute to the GTP site. D14 functions as the Proton acceptor in the catalytic mechanism. Residues D14 and G41 each coordinate Mg(2+). Residues D14–K17, N39–H42, T130, R144, Q225, T240, and R304 each bind IMP. H42 functions as the Proton donor in the catalytic mechanism. Residue A300 to R306 participates in substrate binding. GTP contacts are provided by residues R306, K332–D334, and S414–G416.

The protein belongs to the adenylosuccinate synthetase family. As to quaternary structure, homodimer. It depends on Mg(2+) as a cofactor.

It localises to the cytoplasm. The enzyme catalyses IMP + L-aspartate + GTP = N(6)-(1,2-dicarboxyethyl)-AMP + GDP + phosphate + 2 H(+). Its pathway is purine metabolism; AMP biosynthesis via de novo pathway; AMP from IMP: step 1/2. Functionally, plays an important role in the de novo pathway of purine nucleotide biosynthesis. Catalyzes the first committed step in the biosynthesis of AMP from IMP. The sequence is that of Adenylosuccinate synthetase from Saccharophagus degradans (strain 2-40 / ATCC 43961 / DSM 17024).